The chain runs to 606 residues: Atypical protein kinase C (606 aa).

The PB1 domain occupies 30-113 (SITVKTAYNG…SQLVIHVFPN (84 aa)). The Phorbol-ester/DAG-type zinc finger occupies 145–195 (GHIFQAKRFNRRAFCAYCQDRIWGLGRQGFKCIQCKLLVHKKCHKLVQKHC). The Protein kinase domain maps to 264–532 (FELIRVIGRG…FMDIVSHPFF (269 aa)). Residues 270 to 278 (IGRGSYAKV) and Lys293 each bind ATP. Catalysis depends on Asp388, which acts as the Proton acceptor. The AGC-kinase C-terminal domain maps to 533–604 (KNMDWELLER…VNPLLMSLED (72 aa)).

It belongs to the protein kinase superfamily. AGC Ser/Thr protein kinase family. PKC subfamily. In terms of assembly, interacts with baz; the interaction is required for apical localization of aPKC in neuroblasts and epithelial cells. Interacts with Dap160; the interaction promotes aPKC apical localization and kinase activity. Interacts with and phosphorylates l(2)gl and yrt. Interacts with crb and ref(2)P. Forms a complex with baz, fz and Patj. Expressed in the testis. In spermatid cysts, localizes near the tips of spermatid flagellar axonemes (at protein level). Detectable in freshly laid eggs before onset of zygotic transcription so is deposited in the egg during oogenesis. At the cellular blastoderm stage, present in all cells except the pole cells. During gastrulation, strongly expressed in tissues undergoing morphogenetic movements such as invaginating mesoderm, proctodeum and cephalic furrow. Strongly expressed in neuroblasts.

The protein localises to the cytoplasm. The protein resides in the cell cortex. It localises to the apicolateral cell membrane. It carries out the reaction L-seryl-[protein] + ATP = O-phospho-L-seryl-[protein] + ADP + H(+). It catalyses the reaction L-threonyl-[protein] + ATP = O-phospho-L-threonyl-[protein] + ADP + H(+). Its function is as follows. Serine/threonine protein kinase which is required for apico-basal cell polarity in the germ line as well as in epithelial and neural precursor cells, for epithelial planar cell polarity and for cell proliferation. During oocyte development, required for the posterior translocation of oocyte specification factors and for the posterior establishment of the microtubule organizing center within the presumptive oocyte. Phosphorylates l(2)gl which restricts l(2)gl activity to the oocyte posterior and regulates posterior enrichment of par-1, leading to establishment of correct oocyte polarity. Essential for apical localization of l(2)gl and par-6 in neuroblasts and for exclusion of mira from the apical cortex. Phosphorylates baz which is required for targeting of baz to the postsynaptic region where it is involved in actin organization, and for apical exclusion of baz which is necessary for establishment of the apical/lateral border in epithelial cells. Phosphorylates yrt which prevents its premature apical localization and is necessary for correct epithelial cell polarization. Required for the establishment of mitotic spindle orientation during symmetric division of epithelial cells and for apical exclusion of raps/Pins. Involved in symmetric adherens junction positioning during embryogenesis. Required for polarization of the spermatid cyst which is necessary for sperm differentiation. Required for stimulation of the Toll signaling pathway which activates Dif and dl and plays a role in innate immunity. Plays a role in memory enhancement. The polypeptide is Atypical protein kinase C (Drosophila melanogaster (Fruit fly)).